Reading from the N-terminus, the 149-residue chain is Calmodulin (149 aa).

A2 is subject to N-acetylalanine. 4 EF-hand domains span residues 8–43, 44–79, 81–116, and 117–149; these read EQIA…LGQN, PTEA…KMKD, DSEE…LGEK, and LTDE…MTSK. D21, D23, D25, T27, E32, D57, D59, D61, T63, E68, D94, D96, D98, and E105 together coordinate Ca(2+). K116 is modified (N6,N6,N6-trimethyllysine). Ca(2+)-binding residues include D130, D132, D134, Q136, and E141.

It belongs to the calmodulin family.

Its function is as follows. Calmodulin mediates the control of a large number of enzymes, ion channels and other proteins by Ca(2+). Among the enzymes to be stimulated by the calmodulin-Ca(2+) complex are a number of protein kinases and phosphatases. This is Calmodulin from Renilla reniformis (Sea pansy).